A 595-amino-acid chain; its full sequence is GPI mannosyltransferase 3 (595 aa).

10 helical membrane passes run Tyr58 to Thr78, Leu85 to Ala105, Gly128 to Val148, Phe185 to Trp207, Gly212 to Leu232, Pro235 to Ser255, Leu260 to Ile280, Gly289 to Phe309, Leu319 to Leu339, and Val413 to Thr433.

Belongs to the glycosyltransferase 22 family. PIGB subfamily.

It is found in the endoplasmic reticulum membrane. Its pathway is glycolipid biosynthesis; glycosylphosphatidylinositol-anchor biosynthesis. Its function is as follows. Mannosyltransferase involved in glycosylphosphatidylinositol-anchor biosynthesis. Transfers the third mannose to Man2-GlcN-acyl-PI during GPI precursor assembly. This is GPI mannosyltransferase 3 (GPI10) from Eremothecium gossypii (strain ATCC 10895 / CBS 109.51 / FGSC 9923 / NRRL Y-1056) (Yeast).